The following is a 75-amino-acid chain: Small ribosomal subunit protein bS18 (75 aa).

Belongs to the bacterial ribosomal protein bS18 family. Part of the 30S ribosomal subunit. Forms a tight heterodimer with protein bS6.

Binds as a heterodimer with protein bS6 to the central domain of the 16S rRNA, where it helps stabilize the platform of the 30S subunit. In Teredinibacter turnerae (strain ATCC 39867 / T7901), this protein is Small ribosomal subunit protein bS18.